The chain runs to 858 residues: GDP-fucose protein O-fucosyltransferase 2 (858 aa).

Topologically, residues 1–150 (MHCQLGGQAR…RPPCLLNHRR (150 aa)) are cytoplasmic. The helical; Signal-anchor for type II membrane protein transmembrane segment at 151 to 171 (LLLGLVSVLTVFLSCLPFTNA) threads the bilayer. Residues 172–858 (TVSPAALQDV…WPSLDPSSTL (687 aa)) lie on the Lumenal side of the membrane. Residue 237 to 241 (GEGFH) participates in GDP-beta-L-fucose binding. Glu238 (proton acceptor) is an active-site residue. The tract at residues 448–510 (AALTPQERQR…SRSRKEIQEE (63 aa)) is disordered. Basic and acidic residues predominate over residues 486–510 (DGEREKRKPGRRSDTSRSRKEIQEE). Residues 646–648 (HLR) and 787–788 (RF) each bind GDP-beta-L-fucose. The segment at 819–858 (TGGQAQGKCFATKSHDPPEGRSRSELRRKYWPSLDPSSTL) is disordered. Over residues 831–846 (KSHDPPEGRSRSELRR) the composition is skewed to basic and acidic residues.

This sequence belongs to the glycosyltransferase 68 family.

The protein resides in the endoplasmic reticulum membrane. It catalyses the reaction L-seryl-[protein] + GDP-beta-L-fucose = 3-O-(alpha-L-fucosyl)-L-seryl-[protein] + GDP + H(+). The catalysed reaction is L-threonyl-[protein] + GDP-beta-L-fucose = 3-O-(alpha-L-fucosyl)-L-threonyl-[protein] + GDP + H(+). Its pathway is protein modification; protein glycosylation. In terms of biological role, catalyzes the reaction that attaches fucose through an O-glycosidic linkage to a conserved serine or threonine residue in the consensus sequence C1-X-X-S/T-C2 of thrombospondin type I repeats (TSRs) where C1 and C2 are the first and second cysteines of the repeat, respectively. O-fucosylates microneme protein MIC2 and may play a role in its stabilization. Probably by regulating protein O-fucosylation, may play a role in tachyzoite adhesion to and/or invasion of host cells; however, POFUT2 involvement in adhesion/invasion is controversial. The protein is GDP-fucose protein O-fucosyltransferase 2 of Toxoplasma gondii (strain ATCC 50853 / GT1).